The chain runs to 861 residues: Leucine--tRNA ligase (861 aa).

The 'HIGH' region signature appears at 42 to 52; the sequence is PYPSGKLHMGH. The 'KMSKS' region motif lies at 620–624; that stretch reads KMSKS. K623 serves as a coordination point for ATP.

The protein belongs to the class-I aminoacyl-tRNA synthetase family.

It is found in the cytoplasm. The enzyme catalyses tRNA(Leu) + L-leucine + ATP = L-leucyl-tRNA(Leu) + AMP + diphosphate. The chain is Leucine--tRNA ligase from Buchnera aphidicola subsp. Schizaphis graminum (strain Sg).